The chain runs to 191 residues: Recombination protein RecR (191 aa).

Residues 51–66 (CQTCFHLSADPECEIC) form a C4-type zinc finger. Residues 74–168 (GVICVVADSR…SVSRIAYGLP (95 aa)) form the Toprim domain.

This sequence belongs to the RecR family.

In terms of biological role, may play a role in DNA repair. It seems to be involved in an RecBC-independent recombinational process of DNA repair. It may act with RecF and RecO. The chain is Recombination protein RecR from Synechococcus sp. (strain CC9605).